Consider the following 249-residue polypeptide: ATP synthase subunit a, chloroplastic (249 aa).

5 helical membrane passes run 40–60, 97–117, 136–156, 201–221, and 222–242; these read QVLI…VLAV, VPFI…GALL, INTT…AGLS, LVVV…VMFL, and GLFT…AYIG.

The protein belongs to the ATPase A chain family. As to quaternary structure, F-type ATPases have 2 components, CF(1) - the catalytic core - and CF(0) - the membrane proton channel. CF(1) has five subunits: alpha(3), beta(3), gamma(1), delta(1), epsilon(1). CF(0) has four main subunits: a, b, b' and c.

It is found in the plastid. The protein localises to the chloroplast thylakoid membrane. Functionally, key component of the proton channel; it plays a direct role in the translocation of protons across the membrane. This is ATP synthase subunit a, chloroplastic from Draba nemorosa (Woodland whitlowgrass).